A 1870-amino-acid chain; its full sequence is Non-reducing polyketide synthase pkgA (1870 aa).

Residues 40–279 (IQDLIRRLHR…SRHSALPISG (240 aa)) form an N-terminal acylcarrier protein transacylase domain (SAT) region. The region spanning 416–838 (DAKLAVVGMA…GGNTTLLLED (423 aa)) is the Ketosynthase family 3 (KS3) domain. Residues 453-492 (PPDRFDLDAHFDPSGEKENTTTKGSQSNRPLSRQAEQTDP) form a disordered region. Residues 455-472 (DRFDLDAHFDPSGEKENT) show a composition bias toward basic and acidic residues. Positions 473–492 (TTKGSQSNRPLSRQAEQTDP) are enriched in polar residues. Residues cysteine 577, histidine 712, and histidine 755 each act as for beta-ketoacyl synthase activity in the active site. The interval 947-1282 (AFSGQGCLYH…QSFASLRRGD (336 aa)) is malonyl-CoA:ACP transacylase (MAT) domain. A disordered region spans residues 1004–1027 (RCPHRESTPSSDASHDSNTNRTST). The span at 1011–1027 (TPSSDASHDSNTNRTST) shows a compositional bias: polar residues. Residues 1364–1704 (TSSVQQIIFE…PRALMPVLFP (341 aa)) are product template (PT) domain. The N-terminal hotdog fold stretch occupies residues 1368–1502 (QQIIFEEYDE…ATVCYEEAQD (135 aa)). A PKS/mFAS DH domain is found at 1368–1700 (QQIIFEEYDE…FKAVPRALMP (333 aa)). Histidine 1400 functions as the Proton acceptor; for dehydratase activity in the catalytic mechanism. The segment at 1538–1700 (KGGPRVNNFF…FKAVPRALMP (163 aa)) is C-terminal hotdog fold. Residue aspartate 1602 is the Proton donor; for dehydratase activity of the active site. The 76-residue stretch at 1795–1870 (QSQNAQATAC…VQDLVTWLSK (76 aa)) folds into the Carrier domain. O-(pantetheine 4'-phosphoryl)serine is present on serine 1832.

Pantetheine 4'-phosphate is required as a cofactor.

The enzyme catalyses holo-[ACP] + 6 malonyl-CoA + acetyl-CoA + 6 H(+) = 3,5,7,9,11,13-hexaoxotetradecanoyl-[ACP] + 6 CO2 + 7 CoA. It catalyses the reaction holo-[ACP] + 5 malonyl-CoA + acetyl-CoA + 5 H(+) = 3,5,7,9,11-pentaoxododecanoyl-[ACP] + 5 CO2 + 6 CoA. Its pathway is secondary metabolite biosynthesis. Its function is as follows. Non-reducing polyketide synthase; part of the pkg gene cluster that mediates the biosynthesis of dihydrocitreoisocoumarin and 6,8-dihydroxy-3-(2-oxopropyl)-isocoumarin. The non-reducing polyketide synthase pkgA performs the condensation of one acetyl-CoA starter unit with 6 and 5 malonyl-CoA units, respectively. As pkgA lacks a releasing domain, the thioesterase pkgB is necessary to break the thioester bond and release dihydrocitreoisocoumarin and 6,8-dihydroxy-3-(2-oxopropyl)-isocoumarin from pkgA. The sequence is that of Non-reducing polyketide synthase pkgA from Emericella nidulans (strain FGSC A4 / ATCC 38163 / CBS 112.46 / NRRL 194 / M139) (Aspergillus nidulans).